The following is a 47-amino-acid chain: Large ribosomal subunit protein bL34 (47 aa).

The protein belongs to the bacterial ribosomal protein bL34 family.

In Mycobacterium sp. (strain JLS), this protein is Large ribosomal subunit protein bL34.